The following is a 103-amino-acid chain: Large ribosomal subunit protein uL24 (103 aa).

This sequence belongs to the universal ribosomal protein uL24 family. As to quaternary structure, part of the 50S ribosomal subunit.

Its function is as follows. One of two assembly initiator proteins, it binds directly to the 5'-end of the 23S rRNA, where it nucleates assembly of the 50S subunit. One of the proteins that surrounds the polypeptide exit tunnel on the outside of the subunit. This is Large ribosomal subunit protein uL24 from Anoxybacillus flavithermus (strain DSM 21510 / WK1).